The primary structure comprises 132 residues: ATP synthase epsilon chain (132 aa).

This sequence belongs to the ATPase epsilon chain family. F-type ATPases have 2 components, CF(1) - the catalytic core - and CF(0) - the membrane proton channel. CF(1) has five subunits: alpha(3), beta(3), gamma(1), delta(1), epsilon(1). CF(0) has four main subunits: a, b, b' and c.

The protein localises to the cellular chromatophore membrane. Produces ATP from ADP in the presence of a proton gradient across the membrane. The protein is ATP synthase epsilon chain (atpC) of Rhodobacter capsulatus (Rhodopseudomonas capsulata).